The sequence spans 545 residues: CTP synthase (545 aa).

The interval 1-266 is amidoligase domain; sequence MTTNYIFVTG…DDYICKRFSL (266 aa). Residue Ser14 coordinates CTP. Residue Ser14 participates in UTP binding. Residues 15–20 and Asp72 each bind ATP; that span reads SLGKGI. Mg(2+) contacts are provided by Asp72 and Glu140. CTP contacts are provided by residues 147–149, 187–192, and Lys223; these read DIE and KTKPTQ. Residues 187–192 and Lys223 each bind UTP; that span reads KTKPTQ. 239 to 241 contacts ATP; that stretch reads KDV. Residues 291-542 form the Glutamine amidotransferase type-1 domain; the sequence is TIGMVGKYIE…VKAASEHQKR (252 aa). An L-glutamine-binding site is contributed by Gly352. Cys379 functions as the Nucleophile; for glutamine hydrolysis in the catalytic mechanism. L-glutamine contacts are provided by residues 380 to 383, Glu403, and Arg470; that span reads LGMQ. Residues His515 and Glu517 contribute to the active site.

It belongs to the CTP synthase family. As to quaternary structure, homotetramer.

The catalysed reaction is UTP + L-glutamine + ATP + H2O = CTP + L-glutamate + ADP + phosphate + 2 H(+). The enzyme catalyses L-glutamine + H2O = L-glutamate + NH4(+). It carries out the reaction UTP + NH4(+) + ATP = CTP + ADP + phosphate + 2 H(+). The protein operates within pyrimidine metabolism; CTP biosynthesis via de novo pathway; CTP from UDP: step 2/2. Allosterically activated by GTP, when glutamine is the substrate; GTP has no effect on the reaction when ammonia is the substrate. The allosteric effector GTP functions by stabilizing the protein conformation that binds the tetrahedral intermediate(s) formed during glutamine hydrolysis. Inhibited by the product CTP, via allosteric rather than competitive inhibition. Catalyzes the ATP-dependent amination of UTP to CTP with either L-glutamine or ammonia as the source of nitrogen. Regulates intracellular CTP levels through interactions with the four ribonucleotide triphosphates. In Salmonella arizonae (strain ATCC BAA-731 / CDC346-86 / RSK2980), this protein is CTP synthase.